Consider the following 29-residue polypeptide: Galanin (29 aa).

Alanine 29 carries the post-translational modification Alanine amide.

It belongs to the galanin family.

The protein localises to the secreted. Functionally, contracts smooth muscle of the gastrointestinal and genitourinary tract, regulates growth hormone release, modulates insulin release, and may be involved in the control of adrenal secretion. The chain is Galanin (GAL) from Alligator mississippiensis (American alligator).